A 95-amino-acid polypeptide reads, in one-letter code: Co-chaperonin GroES (95 aa).

This sequence belongs to the GroES chaperonin family. Heptamer of 7 subunits arranged in a ring. Interacts with the chaperonin GroEL.

The protein localises to the cytoplasm. Together with the chaperonin GroEL, plays an essential role in assisting protein folding. The GroEL-GroES system forms a nano-cage that allows encapsulation of the non-native substrate proteins and provides a physical environment optimized to promote and accelerate protein folding. GroES binds to the apical surface of the GroEL ring, thereby capping the opening of the GroEL channel. This chain is Co-chaperonin GroES, found in Neisseria meningitidis serogroup C (strain 053442).